Consider the following 349-residue polypeptide: MEALLEPVVQLFGPAWPAVWTLTKIVAIIAPLMLCVAYLTLAERKVIGYMQVRIGPNRVGPKGLLQPIADGMKLLFKEIIVPTGASKGLFILGPILAIAPSLAAWAVVPFGEGMVLADVNAGLLFLLAITSVEVYGVIIAGWASNSKYPFLGSMRAAAQMVSYEVAMGFALICVLLISASLNLTDIVRSQGQGQFHEMGLSFLSWNWIPLFPMFIVFLISGIAETNRAPFDVVEGESEVVAGHMVEYSGMAFALFFLAEYANMILVSILTSVLFVGGWLSPVSFLPDGFFWLALKTAFFLFVFLWARATFPRFRYDHIMRLGWKVFIPITLVWVIVVAVWMMSPLSIWK.

8 helical membrane passes run 19–39 (VWTL…VAYL), 88–108 (GLFI…WAVV), 123–143 (LLFL…AGWA), 161–181 (VSYE…SASL), 202–222 (FLSW…ISGI), 249–269 (GMAF…VSIL), 284–304 (FLPD…FVFL), and 325–345 (VFIP…MSPL).

It belongs to the complex I subunit 1 family. In terms of assembly, NDH-1 is composed of 14 different subunits. Subunits NuoA, H, J, K, L, M, N constitute the membrane sector of the complex.

The protein resides in the cell inner membrane. The enzyme catalyses a quinone + NADH + 5 H(+)(in) = a quinol + NAD(+) + 4 H(+)(out). NDH-1 shuttles electrons from NADH, via FMN and iron-sulfur (Fe-S) centers, to quinones in the respiratory chain. The immediate electron acceptor for the enzyme in this species is believed to be ubiquinone. Couples the redox reaction to proton translocation (for every two electrons transferred, four hydrogen ions are translocated across the cytoplasmic membrane), and thus conserves the redox energy in a proton gradient. This subunit may bind ubiquinone. This is NADH-quinone oxidoreductase subunit H from Aromatoleum aromaticum (strain DSM 19018 / LMG 30748 / EbN1) (Azoarcus sp. (strain EbN1)).